Consider the following 830-residue polypeptide: DNA gyrase subunit A (830 aa).

Positions 34–514 (LPDVRDGLKP…NHSDINMEDL (481 aa)) constitute a Topo IIA-type catalytic domain. Tyrosine 122 functions as the O-(5'-phospho-DNA)-tyrosine intermediate in the catalytic mechanism. Residues 541–547 (QRRGGKG) carry the GyrA-box motif.

Belongs to the type II topoisomerase GyrA/ParC subunit family. As to quaternary structure, heterotetramer, composed of two GyrA and two GyrB chains. In the heterotetramer, GyrA contains the active site tyrosine that forms a transient covalent intermediate with DNA, while GyrB binds cofactors and catalyzes ATP hydrolysis.

Its subcellular location is the cytoplasm. The enzyme catalyses ATP-dependent breakage, passage and rejoining of double-stranded DNA.. Functionally, a type II topoisomerase that negatively supercoils closed circular double-stranded (ds) DNA in an ATP-dependent manner to modulate DNA topology and maintain chromosomes in an underwound state. Negative supercoiling favors strand separation, and DNA replication, transcription, recombination and repair, all of which involve strand separation. Also able to catalyze the interconversion of other topological isomers of dsDNA rings, including catenanes and knotted rings. Type II topoisomerases break and join 2 DNA strands simultaneously in an ATP-dependent manner. This chain is DNA gyrase subunit A, found in Buchnera aphidicola subsp. Acyrthosiphon pisum (strain APS) (Acyrthosiphon pisum symbiotic bacterium).